The sequence spans 318 residues: MFMINIACLIIPILLAVAFLTLVERKTLGYMQVRKGPNIVGPHGLLQPIADAVKLFTKEPLRPLTSSKLLFTVAPTLALTLALTMWLPLPMPHSLINLNLGVLFILAISSLAVYSILWSGWASNSKYALIGALRAVAQTVSYEVTLAIILLSVLLMSGSFTLTNLITTQEHMWLIIPTWPLAMMWFISTLAETNRAPFDLTEGESELVSGFNVEYAAGPFALFFLAEYANIMMMNALTTLLFLGALHTPLVPGIYTANFVLKTLILTIMFLWIRASYPRFRYDQLMHLLWKNFLPLTLAMLMWHVSSPMSLASIPPQT.

8 helical membrane-spanning segments follow: residues 2–22 (FMIN…FLTL), 69–89 (LLFT…WLPL), 100–120 (LGVL…LWSG), 146–166 (LAII…TNLI), 171–191 (HMWL…STLA), 231–251 (IMMM…TPLV), 253–273 (GIYT…FLWI), and 285–305 (LMHL…MWHV).

It belongs to the complex I subunit 1 family. As to quaternary structure, core subunit of respiratory chain NADH dehydrogenase (Complex I) which is composed of 45 different subunits.

It localises to the mitochondrion inner membrane. It catalyses the reaction a ubiquinone + NADH + 5 H(+)(in) = a ubiquinol + NAD(+) + 4 H(+)(out). Functionally, core subunit of the mitochondrial membrane respiratory chain NADH dehydrogenase (Complex I) which catalyzes electron transfer from NADH through the respiratory chain, using ubiquinone as an electron acceptor. Essential for the catalytic activity and assembly of complex I. This Myrmecophaga tridactyla (Giant anteater) protein is NADH-ubiquinone oxidoreductase chain 1 (MT-ND1).